We begin with the raw amino-acid sequence, 266 residues long: MNNLYRELAPIPGPAWAEIEEEARRTFKRNIAGRRIVDVAGPTGFETSAVTTGHIRDVQSETSGLQVKQRIVQEYIELRTPFTVTRQAIDDVARGSGDSDWQPVKDAATTIAMAEDRAILHGLDAAGIGGIVPGSSNAAVAIPDAVEDFADAVAQALSVLRTVGVDGPYSLLLSSAEYTKVSESTDHGYPIREHLSRQLGAGEIIWAPALEGALLVSTRGGDYELHLGQDLSIGYYSHDSETVELYLQETFGFLALTDESSVPLSL.

The protein belongs to the encapsulin family. Family 1 subfamily. In terms of assembly, homomultimeric. This encapsulin nanocompartment is formed by 60 subunits, and encloses one Dyp homohexamer; partially assembled 58-subunit compartments with and without cargo are also purified. May assemble the shell from dimers. Monomers form pentamers, which assemble to form hollow shells with pores 5-8 Angstroms in diameter where 3 pentamers meet.

The protein resides in the encapsulin nanocompartment. In terms of biological role, shell component of a type 1 encapsulin nanocompartment. Assembles into proteinaceous shells 23-24 nm in diameter with 2-2.5 nm thick walls. Endogenous cargo protein DyP (dye-decolorizing peroxidase) is targeted to the interior via its C-terminal extension; only 1 DyP hexamer is incorporated into each shell. Empty shells can be isolated in the absence of cargo. Cargo encapsulation probably precedes assembly of the nanocompartment; may assemble or disassemble via dimers, subcomplexes with a distinct preference for even numbers of subunits are detected. Nanocompartments are stable against mechanical forces; loaded nanocompartments are less stable than empty ones. Nanocompartments are stable between pH 5-10; they aggregate at pH 9-10 and start to disassemble at pH 11. They are stable in 1M NaCl, 1 M MgCl(2) and 1M CaCl(2), unstable in 20% DMSO (dimethylsulfoxide) and are stable in 20% but not 40% ethanol. The sequence is that of Type 1 encapsulin shell protein from Brevibacterium linens.